Consider the following 461-residue polypeptide: UDP-N-acetylmuramoylalanine--D-glutamate ligase (461 aa).

ATP is bound at residue 123-129 (GTNGKTT).

This sequence belongs to the MurCDEF family.

The protein resides in the cytoplasm. It carries out the reaction UDP-N-acetyl-alpha-D-muramoyl-L-alanine + D-glutamate + ATP = UDP-N-acetyl-alpha-D-muramoyl-L-alanyl-D-glutamate + ADP + phosphate + H(+). The protein operates within cell wall biogenesis; peptidoglycan biosynthesis. In terms of biological role, cell wall formation. Catalyzes the addition of glutamate to the nucleotide precursor UDP-N-acetylmuramoyl-L-alanine (UMA). The chain is UDP-N-acetylmuramoylalanine--D-glutamate ligase from Natranaerobius thermophilus (strain ATCC BAA-1301 / DSM 18059 / JW/NM-WN-LF).